Reading from the N-terminus, the 124-residue chain is Small ribosomal subunit protein uS12 (124 aa).

3-methylthioaspartic acid is present on Asp89.

Belongs to the universal ribosomal protein uS12 family. As to quaternary structure, part of the 30S ribosomal subunit. Contacts proteins S8 and S17. May interact with IF1 in the 30S initiation complex.

Functionally, with S4 and S5 plays an important role in translational accuracy. Interacts with and stabilizes bases of the 16S rRNA that are involved in tRNA selection in the A site and with the mRNA backbone. Located at the interface of the 30S and 50S subunits, it traverses the body of the 30S subunit contacting proteins on the other side and probably holding the rRNA structure together. The combined cluster of proteins S8, S12 and S17 appears to hold together the shoulder and platform of the 30S subunit. In Serratia proteamaculans (strain 568), this protein is Small ribosomal subunit protein uS12.